The chain runs to 92 residues: Probable Fe(2+)-trafficking protein (92 aa).

Belongs to the Fe(2+)-trafficking protein family.

In terms of biological role, could be a mediator in iron transactions between iron acquisition and iron-requiring processes, such as synthesis and/or repair of Fe-S clusters in biosynthetic enzymes. This Xanthomonas oryzae pv. oryzae (strain MAFF 311018) protein is Probable Fe(2+)-trafficking protein.